The sequence spans 177 residues: ATP synthase subunit delta (177 aa).

It belongs to the ATPase delta chain family. As to quaternary structure, F-type ATPases have 2 components, F(1) - the catalytic core - and F(0) - the membrane proton channel. F(1) has five subunits: alpha(3), beta(3), gamma(1), delta(1), epsilon(1). F(0) has three main subunits: a(1), b(2) and c(10-14). The alpha and beta chains form an alternating ring which encloses part of the gamma chain. F(1) is attached to F(0) by a central stalk formed by the gamma and epsilon chains, while a peripheral stalk is formed by the delta and b chains.

The protein localises to the cell membrane. In terms of biological role, f(1)F(0) ATP synthase produces ATP from ADP in the presence of a proton or sodium gradient. F-type ATPases consist of two structural domains, F(1) containing the extramembraneous catalytic core and F(0) containing the membrane proton channel, linked together by a central stalk and a peripheral stalk. During catalysis, ATP synthesis in the catalytic domain of F(1) is coupled via a rotary mechanism of the central stalk subunits to proton translocation. Functionally, this protein is part of the stalk that links CF(0) to CF(1). It either transmits conformational changes from CF(0) to CF(1) or is implicated in proton conduction. The chain is ATP synthase subunit delta from Macrococcus caseolyticus (strain JCSC5402) (Macrococcoides caseolyticum).